The chain runs to 150 residues: UPF0756 membrane protein plu2726 (150 aa).

Transmembrane regions (helical) follow at residues 8 to 28 (LLVLLVLAALGIISHNMTVTL), 51 to 71 (YGLTIGVLILTVGVMAPIASG), 88 to 108 (LLAIVIGVLVSWLGSRGVSLM), and 123 to 143 (VLGVALFKGVPVGPLIAAGIL).

Belongs to the UPF0756 family.

Its subcellular location is the cell membrane. This is UPF0756 membrane protein plu2726 from Photorhabdus laumondii subsp. laumondii (strain DSM 15139 / CIP 105565 / TT01) (Photorhabdus luminescens subsp. laumondii).